The primary structure comprises 213 residues: ATP phosphoribosyltransferase (213 aa).

This sequence belongs to the ATP phosphoribosyltransferase family. Short subfamily. Heteromultimer composed of HisG and HisZ subunits.

It localises to the cytoplasm. The enzyme catalyses 1-(5-phospho-beta-D-ribosyl)-ATP + diphosphate = 5-phospho-alpha-D-ribose 1-diphosphate + ATP. It functions in the pathway amino-acid biosynthesis; L-histidine biosynthesis; L-histidine from 5-phospho-alpha-D-ribose 1-diphosphate: step 1/9. Its function is as follows. Catalyzes the condensation of ATP and 5-phosphoribose 1-diphosphate to form N'-(5'-phosphoribosyl)-ATP (PR-ATP). Has a crucial role in the pathway because the rate of histidine biosynthesis seems to be controlled primarily by regulation of HisG enzymatic activity. The chain is ATP phosphoribosyltransferase from Listeria welshimeri serovar 6b (strain ATCC 35897 / DSM 20650 / CCUG 15529 / CIP 8149 / NCTC 11857 / SLCC 5334 / V8).